A 355-amino-acid polypeptide reads, in one-letter code: tRNA (guanine-N(1)-)-methyltransferase (355 aa).

Residues glycine 109 and 129 to 134 contribute to the S-adenosyl-L-methionine site; that span reads IGDYVL.

Belongs to the RNA methyltransferase TrmD family. As to quaternary structure, homodimer.

It is found in the cytoplasm. The catalysed reaction is guanosine(37) in tRNA + S-adenosyl-L-methionine = N(1)-methylguanosine(37) in tRNA + S-adenosyl-L-homocysteine + H(+). Functionally, specifically methylates guanosine-37 in various tRNAs. The protein is tRNA (guanine-N(1)-)-methyltransferase of Chlamydia caviae (strain ATCC VR-813 / DSM 19441 / 03DC25 / GPIC) (Chlamydophila caviae).